Reading from the N-terminus, the 416-residue chain is 4-hydroxy-3-methylbut-2-en-1-yl diphosphate synthase (flavodoxin) (416 aa).

[4Fe-4S] cluster-binding residues include Cys304, Cys307, Cys350, and Glu357.

It belongs to the IspG family. [4Fe-4S] cluster is required as a cofactor.

The enzyme catalyses (2E)-4-hydroxy-3-methylbut-2-enyl diphosphate + oxidized [flavodoxin] + H2O + 2 H(+) = 2-C-methyl-D-erythritol 2,4-cyclic diphosphate + reduced [flavodoxin]. It functions in the pathway isoprenoid biosynthesis; isopentenyl diphosphate biosynthesis via DXP pathway; isopentenyl diphosphate from 1-deoxy-D-xylulose 5-phosphate: step 5/6. Functionally, converts 2C-methyl-D-erythritol 2,4-cyclodiphosphate (ME-2,4cPP) into 1-hydroxy-2-methyl-2-(E)-butenyl 4-diphosphate. The sequence is that of 4-hydroxy-3-methylbut-2-en-1-yl diphosphate synthase (flavodoxin) from Agrobacterium fabrum (strain C58 / ATCC 33970) (Agrobacterium tumefaciens (strain C58)).